The chain runs to 426 residues: CAAX prenyl protease 1 homolog (426 aa).

The Lumenal segment spans residues 1-3; the sequence is MVN. Residues 4–24 traverse the membrane as a helical segment; the sequence is YFIISISFFLLEHFYSFYLNF. Topologically, residues 25 to 70 are cytoplasmic; sequence RQSKLLKNLTKVPEYCKDRITQEDFKKSQEYSKAKLDYKTLTSTIQ. A helical transmembrane segment spans residues 71 to 91; it reads VLTTLLSFYYPVYPYFWNLSL. Over 92–106 the chain is Lumenal; it reads ELAEKIGYPNEIIRS. The helical transmembrane segment at 107 to 127 threads the bilayer; it reads CFFFAFTVGVSVITEIPFSYY. Topologically, residues 128-150 are cytoplasmic; sequence YQFILEEKFGYNRMTRTLFIKDK. A helical transmembrane segment spans residues 151–171; the sequence is IISTLLMIGFGLPILSLAIFI. The Lumenal segment spans residues 172–178; the sequence is INWSGPQ. A helical membrane pass occupies residues 179 to 199; the sequence is LWFYCWLLLVAITLLSITIYP. At 200–294 the chain is on the cytoplasmic side; that stretch reads TFIQPLFNKF…GHYKMSHTLK (95 aa). Residue histidine 282 coordinates Zn(2+). The active site involves glutamate 283. Histidine 286 serves as a coordination point for Zn(2+). The chain crosses the membrane as a helical span at residues 295–315; that stretch reads QMLLVQVHLVTLLYAFSLLIN. Over 316–333 the chain is Lumenal; sequence DDQLYQQFGFVSSKDSVL. Residues 334 to 354 form a helical membrane-spanning segment; sequence VGLTLFMFLYSPIDRIFSLLI. At 355–426 the chain is on the cytoplasmic side; it reads NIFSRKYEFQ…KVALYKLKNK (72 aa). A Zn(2+)-binding site is contributed by glutamate 362.

The protein belongs to the peptidase M48B family. Requires Zn(2+) as cofactor.

Its subcellular location is the endoplasmic reticulum membrane. It catalyses the reaction Hydrolyzes the peptide bond -P2-(S-farnesyl or geranylgeranyl)C-P1'-P2'-P3'-COOH where P1' and P2' are amino acids with aliphatic side chains and P3' is any C-terminal residue.. Functionally, proteolytically removes the C-terminal three residues of farnesylated proteins. The polypeptide is CAAX prenyl protease 1 homolog (zmpste24) (Dictyostelium discoideum (Social amoeba)).